A 912-amino-acid polypeptide reads, in one-letter code: Protein transport protein SEC24-2 (912 aa).

Residues 1–11 (MSNPSRPKKRV) are compositionally biased toward basic residues. Disordered stretches follow at residues 1–83 (MSNP…QQIS) and 102–129 (PNAYYQPNNGNNIQPTGENKPSLTPGRP). Composition is skewed to polar residues over residues 33–45 (SGQTMQSQVSGSA), 53–74 (GQFTQPMNASDAQNQPQFMTPA), and 106–129 (YQPNNGNNIQPTGENKPSLTPGRP). Positions 226, 229, 248, and 251 each coordinate Zn(2+). The zinc finger-like stretch occupies residues 226 to 251 (CRRCRGYLNPFVKILQVESKWRCNFC).

It belongs to the SEC23/SEC24 family. SEC24 subfamily. In terms of assembly, the COPII coat is composed of at least 5 proteins: the SEC23/24 complex, the SEC13/31 complex, and the protein SAR1. Golgi apparatus membrane; Peripheral membrane protein; Cytoplasmic side.

It localises to the cytoplasm. It is found in the cytoplasmic vesicle. The protein localises to the COPII-coated vesicle membrane. The protein resides in the endoplasmic reticulum membrane. Its subcellular location is the golgi apparatus membrane. Component of the coat protein complex II (COPII) which promotes the formation of transport vesicles from the endoplasmic reticulum (ER). The coat has two main functions, the physical deformation of the endoplasmic reticulum membrane into vesicles and the selection of cargo molecules. This is Protein transport protein SEC24-2 (SEC242) from Naumovozyma castellii (Yeast).